Reading from the N-terminus, the 190-residue chain is Translation machinery-associated protein 22 (190 aa).

Residues 63–83 (LNVSGTKDSNAEEQPAKLTKE) form a disordered region. Positions 99–170 (VLIKTIERTK…DIFDFILEKF (72 aa)) constitute an SUI1 domain.

It belongs to the DENR family. Interacts with the 40S ribosomal subunit.

The protein localises to the cytoplasm. The protein is Translation machinery-associated protein 22 (tma22) of Schizosaccharomyces pombe (strain 972 / ATCC 24843) (Fission yeast).